The following is a 327-amino-acid chain: 2-methoxy-6-polyprenyl-1,4-benzoquinol methylase, mitochondrial (327 aa).

Residues 1–42 constitute a mitochondrion transit peptide; it reads MAAPGSCALWSYCGRGWSRAMRGCQLLGLRSSWPGDLLSARL. S-adenosyl-L-methionine-binding positions include threonine 117, aspartate 171, and 199–200; that span reads DA.

The protein belongs to the class I-like SAM-binding methyltransferase superfamily. MenG/UbiE family. Component of a multi-subunit COQ enzyme complex, composed of at least COQ3, COQ4, COQ5, COQ6, COQ7 and COQ9. Interacts with PYURF; the interaction is direct, stabilizes COQ5 protein and associates PYURF with COQ enzyme complex. In terms of tissue distribution, widely expressed, with highest levels in liver, lung, placenta and skeletal muscle.

It is found in the mitochondrion inner membrane. The enzyme catalyses 2-methoxy-6-(all-trans-decaprenyl)benzene-1,4-diol + S-adenosyl-L-methionine = 5-methoxy-2-methyl-3-(all-trans-decaprenyl)benzene-1,4-diol + S-adenosyl-L-homocysteine + H(+). It functions in the pathway cofactor biosynthesis; ubiquinone biosynthesis. Methyltransferase required for the conversion of 2-decaprenyl-6-methoxy-1,4-benzoquinol (DDMQH2) to 2-decaprenyl-3-methyl-6-methoxy-1,4-benzoquinol (DMQH2). The chain is 2-methoxy-6-polyprenyl-1,4-benzoquinol methylase, mitochondrial from Homo sapiens (Human).